We begin with the raw amino-acid sequence, 916 residues long: MKTPAPGRIHSIVLVLLSLAVLQTSKAQKVQNDIDIYSLTVDSKVSSRFAHTVITSRVVNKADAVREATFQMELPKKAFITNFSMVIDGVTYPGNIKEKAAAQEQYSAAVARGESAGLVRATGRKTEQFQVSVSVAPAAKVTFELVYEELLARHLGAYELLLKVRPQQLVKHLQMDIHIFEPQGISFLETESTFMTNKLAEALTTSQNKTKAHVRFKPTLSQQQKYPEKQDTVIDGSFIVRYDVDRPLSGGSIQIENGYFVHYFAPDSLSTIPKNVIFVIDKSGSMMGRKIKQTREALIKILDDLSPHDQFDLISFSSEATTWKPLLVPASTENVNEAKSYATGIQAQGGTNINDAMLMAVQLLEKANQEELLPEGSITLIILLTDGDPTVGETNPLNIQKNVRKAINGQHSLFCLGFGFDVSYAFLEKMALENGGLARRIYEDSDSALQLQDFYQEVANPLMTSVAFEYPSNAVESVTQDTFRVFFKGSELVVAGKLREQSPDVLLAQIRGQLHRENITYMMMSHVAEQEEMFRSPKYIFHSFIERLWAYLTIQQLLEQMVSALDAEKQALEARALSLSLSYSFVTPLTSMVITKPEGQEQSQVAEKPVEDESRGSRVYLGPMRFGHSVGDRTSRKPGGGLKLLNGTPLFGPPGPPAAASPFHRMTSRLVLPELMSPLAPASAPSPTSGPGGASHDTDFRIKGTTPTALPFAPVQAPSVILPLPGQSVDRLCVDLRRPQELVNLLSDPDQGVEVTGHFETAKARFSWIEVTFENPQVQIHASPEHVVMTRNRRNSAYKWKETLYSVMPGLKVTMDKEGLLLLSRPDRVTIGLLFWDGPGKGLRLLLQNTDRFSSHVSGTLGQFYQDVLWGPLDTADDSKRTLKVQGRDYSATRELKLDYQESPPGKEISCWSVEL.

The N-terminal stretch at 1–27 (MKTPAPGRIHSIVLVLLSLAVLQTSKA) is a signal peptide. One can recognise a VIT domain in the interval 28–149 (QKVQNDIDIY…KVTFELVYEE (122 aa)). 2 N-linked (GlcNAc...) asparagine glycosylation sites follow: N82 and N208. The region spanning 275-458 (NVIFVIDKSG…LQLQDFYQEV (184 aa)) is the VWFA domain. N518 carries N-linked (GlcNAc...) asparagine glycosylation. Disordered stretches follow at residues 597–616 (PEGQ…ESRG) and 678–701 (PLAP…TDFR). Over residues 678-689 (PLAPASAPSPTS) the composition is skewed to low complexity. S683 carries O-linked (GalNAc...) serine glycosylation. Residues T705, T706, and T708 are each glycosylated (O-linked (GalNAc...) threonine). A disulfide bridge connects residues C733 and C911.

This sequence belongs to the ITIH family. As to quaternary structure, interacts (via C-terminus) with DNAJC1 (via SANT 2 domain). In terms of processing, appears to be both N- and O-glycosylated.

It localises to the secreted. Its function is as follows. Type II acute-phase protein (APP) involved in inflammatory responses to trauma. May also play a role in liver development or regeneration. The protein is Inter-alpha-trypsin inhibitor heavy chain H4 (ITIH4) of Bos taurus (Bovine).